The primary structure comprises 868 residues: uncharacterized protein (868 aa).

Its subcellular location is the cytoplasm. The protein resides in the nucleus. This is an uncharacterized protein from Schizosaccharomyces pombe (strain 972 / ATCC 24843) (Fission yeast).